A 397-amino-acid chain; its full sequence is 16-O-methyltransferase bsc6 (397 aa).

Aspartate 262 contacts S-adenosyl-L-methionine. Residue histidine 302 is the Proton acceptor of the active site.

It belongs to the class I-like SAM-binding methyltransferase superfamily. Cation-independent O-methyltransferase family. It depends on S-adenosyl-L-methionine as a cofactor.

It functions in the pathway mycotoxin biosynthesis. Its function is as follows. 16-O-methyltransferase; part of the gene cluster that mediates the biosynthesis of the diterpene glucoside brassicicene C. In the first step of the brassicicene C biosynthesis, the bifunctional diterpene synthase bsc8 that possesses both prenyl transferase and terpene cyclase activity, converts isopentenyl diphosphate and dimethylallyl diphosphate into geranylgeranyl diphosphate (GGDP) that is further converted into fusicocca-2,10(14)-diene, the first precursor for brassicicene C. Fusicocca-2,10(14)-diene is then substrate of cytochrome P450 monooxygenase bsc1 for hydroxylation at the C-8 position. Oxidation at C-16 position to aldehyde is then catalyzed by the cytochrome P450 monooyxygenase bsc7, yielding fusicocca-2,10(14)-diene-8-beta,16-diol. Follows the isomerization of the double bond and reduction of aldehyde to alcohol catalyzed by the short-chain dehydrogenase/reductase bsc3 to yield the diol compound fusicocca-1,10(14)-diene-8 beta,16-diol. The next step is the oxidation at the C-3 position of fusicocca-2,10(14)-diene-8-beta,16-diol catalyzed by the alpha-ketoglutarate dependent dioxygenase bsc9, to produce a triol compound. Methylation of the hydroxy group at position 16 is performed by the methyltransferase bsc6. 16-O-methylation is followed by oxidation at the C-13 position to ketone and an alkyl shift of the methyl group leads to brassicicene C. Although the probable acetyltransferase bsc4 is included in the gene cluster, no acetylation reactions are necessary for brassicicene C biosynthesis. However, the fact that brassicicene E, which is a structurally related compound having an acetoxy group at position 12, was previously isolated from another strain of A.brassicicola suggests that the ATCC 96836 strain might also produce a small amount of brassicicene E. This Alternaria brassicicola (Dark leaf spot agent) protein is 16-O-methyltransferase bsc6.